A 341-amino-acid chain; its full sequence is MSEITASPRHDWTLAEVEALFALPFMELVFQAANVHRAHFDPSEIQLSQLLSVKTGGCAENCGYCSQSAHFKTGLKADKLMAADDVVAKARAARDGGAQRFCMGAAWRELKDRDLPKLTEMIGEVKALGLETCATLGMLTADQAKALKAAGLDYYNHNLDTGPDYYKDVVTTRTYQERLDTLAHVRDAGMSTCCGGIVGMGEQRRDRAGLLHQLATLPAHPDSLPINGLVPISGTPLGDKVLSEGKAIDAIEFVRTIAVARIVCPKSMVRLSAGREGMSRELQALCFMAGANSIFVGGKLLTTPLPGQDEDSQLFQDLDLKPMGGAVRVEAKADAAMVAAE.

One can recognise a Radical SAM core domain in the interval 43–266 (SEIQLSQLLS…IAVARIVCPK (224 aa)). 3 residues coordinate [4Fe-4S] cluster: cysteine 58, cysteine 62, and cysteine 65. Residues cysteine 102, cysteine 133, cysteine 193, and arginine 270 each coordinate [2Fe-2S] cluster.

It belongs to the radical SAM superfamily. Biotin synthase family. As to quaternary structure, homodimer. It depends on [4Fe-4S] cluster as a cofactor. [2Fe-2S] cluster is required as a cofactor.

It catalyses the reaction (4R,5S)-dethiobiotin + (sulfur carrier)-SH + 2 reduced [2Fe-2S]-[ferredoxin] + 2 S-adenosyl-L-methionine = (sulfur carrier)-H + biotin + 2 5'-deoxyadenosine + 2 L-methionine + 2 oxidized [2Fe-2S]-[ferredoxin]. It participates in cofactor biosynthesis; biotin biosynthesis; biotin from 7,8-diaminononanoate: step 2/2. Catalyzes the conversion of dethiobiotin (DTB) to biotin by the insertion of a sulfur atom into dethiobiotin via a radical-based mechanism. The polypeptide is Biotin synthase (Caulobacter vibrioides (strain ATCC 19089 / CIP 103742 / CB 15) (Caulobacter crescentus)).